A 674-amino-acid chain; its full sequence is Ribonuclease E (674 aa).

One can recognise an S1 motif domain in the interval 35 to 117; it reads GDIYLGLVDN…LTGNISMPGR (83 aa). Mg(2+)-binding residues include Asp-296 and Asp-339. 2 residues coordinate Zn(2+): Cys-397 and Cys-400. Disordered regions lie at residues 458–529 and 626–674; these read PLDL…RRVE and QPRE…SSAE. Basic and acidic residues-rich tracts occupy residues 484–493 and 509–529; these read GSEFSEKENI and TKEK…RRVE. Residues 663 to 674 are compositionally biased toward basic residues; the sequence is RPGRRRRRSSAE. A C4 Arg-rich motif, probably responsible for interaction with PNPase motif is present at residues 665–673; it reads GRRRRRSSA.

Belongs to the RNase E/G family. As to quaternary structure, fractionates in a 250-300 kDa region, which is too small to be the equivalent of an RNA degradosome, as occurs with E.coli RNase E. Interacts with polynucleotide phosphorylase (PNPase, pnp), probably via the C4 Arg-rich motif (residues 665-673). The cofactor is Mg(2+).

It localises to the cytoplasm. Its subcellular location is the cell inner membrane. The enzyme catalyses Endonucleolytic cleavage of single-stranded RNA in A- and U-rich regions.. Endoribonuclease that plays a central role in rRNA processing and mRNA decay, and probably tRNA processing. Acts on 9S rRNA (the precursor of 5S rRNA) and RNAI, a molecule that controls the replication of ColE1 plasmid. Upon expression in E.coli does not purify with endogenous degradosome proteins. Prefers 5'-monophosphorylated substrates over 5'-triphosphorylated substrates. Complements an rne temperature-sensitive mutation in E.coli, despite being considerably shorter and not able to interact with the E.coli degradosome. Cleaves AU-rich sequences in vitro, tested with psbA2 mRNA. Complements both an rne temperature-sensitive mutation and an rng deletion in E.coli. Acts in the degradation of psaL mRNA in the presence but not the absence of the sRNA PsrR1. Cleaves the rimO-crhR transcript, contributing to the very short half-life of rimO mRNA. Functionally, mRNA for psbA2, one of the core proteins in photosystem II, is degraded in the dark under control of a cis-acting AU-rich box in its 5'-UTR. RNase E cuts in this box, suggesting it is involved in this dark-induced mRNA instability. Its function is as follows. CRISPR (clustered regularly interspaced short palindromic repeat) is an adaptive immune system that provides protection against mobile genetic elements (viruses, transposable elements and conjugative plasmids). CRISPR clusters contain spacers, sequences complementary to antecedent mobile elements, and target invading nucleic acids. CRISPR clusters are transcribed and processed into CRISPR RNA (crRNA). Endogenous RNase E is required for correct processing of pre-crRNA for the CRISPR3 subtype III-B system in this genome (genes sll7080 to sll7095). This CRISPR3 system does not include a cas6 gene, which is the usual RNase involved in crRNA maturation. This is Ribonuclease E from Synechocystis sp. (strain ATCC 27184 / PCC 6803 / Kazusa).